The sequence spans 1168 residues: ATP-dependent DNA helicase mph1 (1168 aa).

Polar residues-rich tracts occupy residues 24–38 (NITSHHPSNSKQLAS) and 59–68 (PTVSQGQATA). A disordered region spans residues 24-132 (NITSHHPSNS…PFRADMPPEQ (109 aa)). A compositionally biased stretch (low complexity) spans 71 to 88 (RAKTASKPTTSATTSRPS). The span at 89–104 (LAQSSQRKNLRQTTLW) shows a compositional bias: polar residues. The 169-residue stretch at 162–330 (IVKNGLFNNT…DVIDNLGISH (169 aa)) folds into the Helicase ATP-binding domain. Residue 175 to 182 (LPTGLGKT) participates in ATP binding. Residues 278–281 (DEAH) carry the DEAH box motif. The region spanning 506 to 665 (LVNHFMDAGE…GSRFTFRHDL (160 aa)) is the Helicase C-terminal domain. 2 disordered regions span residues 690-717 (SQNPELPEPKRSAARMRTKPAKKKFNMP) and 830-1168 (APAN…DDQE). Basic residues predominate over residues 701–714 (SAARMRTKPAKKKF). A compositionally biased stretch (polar residues) spans 895–907 (TAKTKSTGVSKQT). A compositionally biased stretch (acidic residues) spans 920–936 (DCEEGGNEYDGNVDDDE). Over residues 941 to 959 (RNFRSKGRGRGSGRGKKSQ) the composition is skewed to basic residues. The segment covering 985-996 (GSDDGADLEDFI) has biased composition (acidic residues). A compositionally biased stretch (polar residues) spans 1001-1030 (EVTSSLQHRPRGSTSPTTAPDAGSSSLSSK).

It belongs to the DEAD box helicase family. DEAH subfamily. FANCM sub-subfamily. Interacts with the MHF histone-fold complex to form the FANCM-MHF complex.

The protein localises to the nucleus. The catalysed reaction is ATP + H2O = ADP + phosphate + H(+). Functionally, ATP-dependent DNA helicase involved in DNA damage repair by homologous recombination and in genome maintenance. Capable of unwinding D-loops. Plays a role in limiting crossover recombinants during mitotic DNA double-strand break (DSB) repair. Component of a FANCM-MHF complex which promotes gene conversion at blocked replication forks, probably by reversal of the stalled fork. In Neurospora crassa (strain ATCC 24698 / 74-OR23-1A / CBS 708.71 / DSM 1257 / FGSC 987), this protein is ATP-dependent DNA helicase mph1.